Reading from the N-terminus, the 358-residue chain is Homer protein homolog 3 (358 aa).

A required for interaction with NFATC2 region spans residues 1 to 80 (MSTAREQPIF…TKTSQKFGQW (80 aa)). The WH1 domain maps to 1 to 113 (MSTAREQPIF…EKFQEVKEAA (113 aa)). Residues 95-122 (SEQQLTQFAEKFQEVKEAARLAREKSQD) adopt a coiled-coil conformation. 2 positions are modified to phosphoserine: S120 and S158. 2 disordered regions span residues 137-168 (QVPPSPLVSTNGPEEKLFRSQSADAPGPTERE) and 239-296 (AEPV…QVQD). Positions 190–355 (ALQDSNQRLA…LREGLARLAE (166 aa)) form a coiled coil. A compositionally biased stretch (basic and acidic residues) spans 257–267 (LEARVQTKDQE). Residues 268 to 277 (IQTLKNQSTG) are compositionally biased toward polar residues. Residues 280–290 (EAPDTAEREET) show a composition bias toward basic and acidic residues.

This sequence belongs to the Homer family. Tetramer. Encodes coiled-coil structures that mediate homo- and heteromultimerization. Interacts with NFATC2; interaction is calcium independent; interaction competes with PPP3CA for NFATC2 binding; interaction is reduced by AKT activation. Interacts with NFATC1 and NFATC4. Interacts with SHANK1; forms a high-order complex at least composed of SHANK1 and HOMER3; the complex formation is regulated by CAMK2A-mediated phosphorylation.

It localises to the cytoplasm. The protein resides in the postsynaptic density. It is found in the synapse. In terms of biological role, postsynaptic density scaffolding protein. Binds and cross-links cytoplasmic regions of GRM1, GRM5, ITPR1, DNM3, RYR1, RYR2, SHANK1 and SHANK3. By physically linking GRM1 and GRM5 with ER-associated ITPR1 receptors, it aids the coupling of surface receptors to intracellular calcium release. Negatively regulates T cell activation by inhibiting the calcineurin-NFAT pathway. Acts by competing with calcineurin/PPP3CA for NFAT protein binding, hence preventing NFAT activation by PPP3CA. The polypeptide is Homer protein homolog 3 (Rattus norvegicus (Rat)).